Consider the following 279-residue polypeptide: NAD kinase (279 aa).

Asp61 acts as the Proton acceptor in catalysis. Residues 61 to 62 (DG), 138 to 139 (ND), Lys149, Lys166, Asp168, and 179 to 184 (TGYSFS) each bind NAD(+).

It belongs to the NAD kinase family. Requires a divalent metal cation as cofactor.

The protein localises to the cytoplasm. It carries out the reaction NAD(+) + ATP = ADP + NADP(+) + H(+). Functionally, involved in the regulation of the intracellular balance of NAD and NADP, and is a key enzyme in the biosynthesis of NADP. Catalyzes specifically the phosphorylation on 2'-hydroxyl of the adenosine moiety of NAD to yield NADP. The protein is NAD kinase of Borreliella burgdorferi (strain ATCC 35210 / DSM 4680 / CIP 102532 / B31) (Borrelia burgdorferi).